We begin with the raw amino-acid sequence, 310 residues long: Aspartate carbamoyltransferase catalytic subunit 3 (310 aa).

Carbamoyl phosphate is bound by residues Arg-55 and Thr-56. L-aspartate is bound at residue Lys-85. 3 residues coordinate carbamoyl phosphate: Arg-106, His-134, and Gln-137. 2 residues coordinate L-aspartate: Arg-167 and Arg-228. Positions 266 and 267 each coordinate carbamoyl phosphate.

The protein belongs to the aspartate/ornithine carbamoyltransferase superfamily. ATCase family. As to quaternary structure, heterododecamer (2C3:3R2) of six catalytic PyrB chains organized as two trimers (C3), and six regulatory PyrI chains organized as three dimers (R2).

The enzyme catalyses carbamoyl phosphate + L-aspartate = N-carbamoyl-L-aspartate + phosphate + H(+). It participates in pyrimidine metabolism; UMP biosynthesis via de novo pathway; (S)-dihydroorotate from bicarbonate: step 2/3. Functionally, catalyzes the condensation of carbamoyl phosphate and aspartate to form carbamoyl aspartate and inorganic phosphate, the committed step in the de novo pyrimidine nucleotide biosynthesis pathway. This chain is Aspartate carbamoyltransferase catalytic subunit 3, found in Shewanella halifaxensis (strain HAW-EB4).